A 544-amino-acid polypeptide reads, in one-letter code: Probable protein kinase UbiB (544 aa).

Residues 123–505 enclose the Protein kinase domain; sequence EFDEQALASA…GRQKSHNVRS (383 aa). Residues 129–137 and Lys-156 contribute to the ATP site; that span reads LASASIAQV. The active-site Proton acceptor is the Asp-291. A helical membrane pass occupies residues 522 to 540; the sequence is LPLWLSCGTLVTVLLVLLL.

This sequence belongs to the ABC1 family. UbiB subfamily.

It localises to the cell inner membrane. It functions in the pathway cofactor biosynthesis; ubiquinone biosynthesis [regulation]. Is probably a protein kinase regulator of UbiI activity which is involved in aerobic coenzyme Q (ubiquinone) biosynthesis. The chain is Probable protein kinase UbiB from Actinobacillus pleuropneumoniae serotype 5b (strain L20).